The following is a 216-amino-acid chain: Glycerol-3-phosphate acyltransferase (216 aa).

6 consecutive transmembrane segments (helical) span residues Phe3–Ala23, Ile48–Val68, Phe82–Phe102, Phe112–Val132, Leu142–Leu162, and Glu166–His186.

This sequence belongs to the PlsY family. In terms of assembly, probably interacts with PlsX.

It localises to the cell inner membrane. It catalyses the reaction an acyl phosphate + sn-glycerol 3-phosphate = a 1-acyl-sn-glycero-3-phosphate + phosphate. It participates in lipid metabolism; phospholipid metabolism. Its function is as follows. Catalyzes the transfer of an acyl group from acyl-phosphate (acyl-PO(4)) to glycerol-3-phosphate (G3P) to form lysophosphatidic acid (LPA). This enzyme utilizes acyl-phosphate as fatty acyl donor, but not acyl-CoA or acyl-ACP. The sequence is that of Glycerol-3-phosphate acyltransferase from Leptospira interrogans serogroup Icterohaemorrhagiae serovar Lai (strain 56601).